Consider the following 156-residue polypeptide: Small ribosomal subunit protein uS7 (156 aa).

It belongs to the universal ribosomal protein uS7 family. As to quaternary structure, part of the 30S ribosomal subunit. Contacts proteins S9 and S11.

Functionally, one of the primary rRNA binding proteins, it binds directly to 16S rRNA where it nucleates assembly of the head domain of the 30S subunit. Is located at the subunit interface close to the decoding center, probably blocks exit of the E-site tRNA. In Streptomyces coelicolor (strain ATCC BAA-471 / A3(2) / M145), this protein is Small ribosomal subunit protein uS7 (rspG).